Consider the following 402-residue polypeptide: Phosphoglycerate kinase (402 aa).

Residues 24–26 (DFN), Arg-40, 63–66 (HFGR), Arg-122, and Arg-155 each bind substrate. ATP is bound by residues Lys-206, Gly-297, Glu-328, and 358–361 (GGDS).

This sequence belongs to the phosphoglycerate kinase family. As to quaternary structure, monomer.

The protein localises to the cytoplasm. The enzyme catalyses (2R)-3-phosphoglycerate + ATP = (2R)-3-phospho-glyceroyl phosphate + ADP. It functions in the pathway carbohydrate degradation; glycolysis; pyruvate from D-glyceraldehyde 3-phosphate: step 2/5. This Prochlorococcus marinus (strain MIT 9515) protein is Phosphoglycerate kinase.